The chain runs to 60 residues: Protein CADMIUM TOLERANCE 4 (60 aa).

Residues 26-42 (GFLYACLFMLCCCFCCY) form a helical membrane-spanning segment.

The protein belongs to the CYSTM1 family. In terms of tissue distribution, mainly expressed in shoots, and, to a lower extent, in roots.

The protein resides in the cell membrane. It localises to the secreted. The protein localises to the cell wall. Its function is as follows. Confers resistance to heavy metal ions (e.g. aluminium (Al)) by chelating them at the plasma membrane of root cells, thus stopping their entry and reducing their accumulation. This is Protein CADMIUM TOLERANCE 4 from Oryza sativa subsp. japonica (Rice).